The chain runs to 342 residues: Probable dual-specificity RNA methyltransferase RlmN (342 aa).

The active-site Proton acceptor is glutamate 91. Positions 97–327 (YKHGNSICVS…TTIRREMGAD (231 aa)) constitute a Radical SAM core domain. Cysteines 104 and 332 form a disulfide. The [4Fe-4S] cluster site is built by cysteine 111, cysteine 115, and cysteine 118. Residues 158 to 159 (GE), serine 190, 213 to 215 (SLH), and asparagine 289 contribute to the S-adenosyl-L-methionine site. The active-site S-methylcysteine intermediate is cysteine 332.

It belongs to the radical SAM superfamily. RlmN family. The cofactor is [4Fe-4S] cluster.

The protein resides in the cytoplasm. It catalyses the reaction adenosine(2503) in 23S rRNA + 2 reduced [2Fe-2S]-[ferredoxin] + 2 S-adenosyl-L-methionine = 2-methyladenosine(2503) in 23S rRNA + 5'-deoxyadenosine + L-methionine + 2 oxidized [2Fe-2S]-[ferredoxin] + S-adenosyl-L-homocysteine. It carries out the reaction adenosine(37) in tRNA + 2 reduced [2Fe-2S]-[ferredoxin] + 2 S-adenosyl-L-methionine = 2-methyladenosine(37) in tRNA + 5'-deoxyadenosine + L-methionine + 2 oxidized [2Fe-2S]-[ferredoxin] + S-adenosyl-L-homocysteine. In terms of biological role, specifically methylates position 2 of adenine 2503 in 23S rRNA and position 2 of adenine 37 in tRNAs. This chain is Probable dual-specificity RNA methyltransferase RlmN, found in Clostridium botulinum (strain ATCC 19397 / Type A).